We begin with the raw amino-acid sequence, 302 residues long: MARRALDGVLLLDKPVGLSSNDALMRAKRLYQVKKAGHTGTLDPLASGLLPLCFGEATKFSQDLLEADKTYEATMRLGVRTTTGDAEGDVLDTRDVSCDEAAVRAALARFVGEIVQVPPMYSALKRDGKPLYEYARAGQTVEREGRTVTIRALALVSCALPDVTFRVTCSKGTYVRTLAEDIGEALGCGAHLTMLRRTGVGPLTLEHAVTLDALDAATQDERDARLAPVDALLSTFPCVKLDAALATRFLHGQRLKLSELAARPDAAEGGRVRVYDADDRLLGVARASEGVLAPERLVVTGA.

The Nucleophile role is filled by aspartate 43.

Belongs to the pseudouridine synthase TruB family. Type 1 subfamily.

It catalyses the reaction uridine(55) in tRNA = pseudouridine(55) in tRNA. In terms of biological role, responsible for synthesis of pseudouridine from uracil-55 in the psi GC loop of transfer RNAs. The chain is tRNA pseudouridine synthase B from Burkholderia pseudomallei (strain 668).